The primary structure comprises 166 residues: Ribonuclease H (166 aa).

Positions 10-151 constitute an RNase H type-1 domain; the sequence is KRVRVDMFTD…ADELARRGTS (142 aa). Mg(2+) is bound by residues Asp-19, Glu-57, Asp-79, and Asp-143. A compositionally biased stretch (basic and acidic residues) spans 145–157; sequence LARRGTSEARQGK. Residues 145-166 are disordered; that stretch reads LARRGTSEARQGKVDGQSSTIL.

Belongs to the RNase H family. In terms of assembly, monomer. Mg(2+) serves as cofactor.

The protein resides in the cytoplasm. It carries out the reaction Endonucleolytic cleavage to 5'-phosphomonoester.. Functionally, endonuclease that specifically degrades the RNA of RNA-DNA hybrids. In Rhodospirillum rubrum (strain ATCC 11170 / ATH 1.1.1 / DSM 467 / LMG 4362 / NCIMB 8255 / S1), this protein is Ribonuclease H.